The primary structure comprises 79 residues: Acyl carrier protein (79 aa).

In terms of domain architecture, Carrier spans 2 to 77 (SDIEARVKKI…NAVDYATKNQ (76 aa)). O-(pantetheine 4'-phosphoryl)serine is present on Ser37.

This sequence belongs to the acyl carrier protein (ACP) family. Post-translationally, 4'-phosphopantetheine is transferred from CoA to a specific serine of apo-ACP by AcpS. This modification is essential for activity because fatty acids are bound in thioester linkage to the sulfhydryl of the prosthetic group.

It localises to the cytoplasm. The protein operates within lipid metabolism; fatty acid biosynthesis. Its function is as follows. Carrier of the growing fatty acid chain in fatty acid biosynthesis. In Variovorax paradoxus (strain S110), this protein is Acyl carrier protein.